We begin with the raw amino-acid sequence, 200 residues long: MQLSGRRVICVRGGREVFAGLDFEAVSGEAVAVVGRNGSGKTSLLRLIAGLLIPAGGTIALDGGDAELTLPEQCHYLGHRDALKPALSVAENLSFWADFLGGERLDAHESLATVGLDHATHLPAAFLSAGQRRRLSLARLLTVRRPIWLLDEPTTALDVAGQDMFGGLMRDHLARGGLIIAATHMALGIDSRELRIGGVA.

One can recognise an ABC transporter domain in the interval 3–199; sequence LSGRRVICVR…DSRELRIGGV (197 aa). An ATP-binding site is contributed by 35–42; the sequence is GRNGSGKT.

This sequence belongs to the ABC transporter superfamily. CcmA exporter (TC 3.A.1.107) family. The complex is composed of two ATP-binding proteins (CcmA) and two transmembrane proteins (CcmB).

Its subcellular location is the cell inner membrane. The catalysed reaction is heme b(in) + ATP + H2O = heme b(out) + ADP + phosphate + H(+). Functionally, part of the ABC transporter complex CcmAB involved in the biogenesis of c-type cytochromes; once thought to export heme, this seems not to be the case, but its exact role is uncertain. Responsible for energy coupling to the transport system. In Bradyrhizobium diazoefficiens (strain JCM 10833 / BCRC 13528 / IAM 13628 / NBRC 14792 / USDA 110), this protein is Cytochrome c biogenesis ATP-binding export protein CcmA.